The chain runs to 509 residues: H/ACA ribonucleoprotein complex subunit DKC1 (509 aa).

Residues 1–25 (MADAEAAMTFPKKHKKKKERKPLPE) are disordered. Ala2 carries the post-translational modification N-acetylalanine. Residues 2–22 (ADAEAAMTFPKKHKKKKERKP) are nucleolar localization. The span at 11 to 20 (PKKHKKKKER) shows a compositional bias: basic residues. Glycyl lysine isopeptide (Lys-Gly) (interchain with G-Cter in SUMO2) cross-links involve residues Lys21, Lys40, and Lys44. The active-site Nucleophile is the Asp126. Lys192 is covalently cross-linked (Glycyl lysine isopeptide (Lys-Gly) (interchain with G-Cter in SUMO2)). Residues 297 to 372 (HKRLVMKDSA…VVAKIKRVIM (76 aa)) form the PUA domain. The interval 381 to 509 (WGLGPKASQK…KARAAEELSG (129 aa)) is disordered. At Ser388 the chain carries Phosphoserine. Glycyl lysine isopeptide (Lys-Gly) (interchain with G-Cter in SUMO2) cross-links involve residues Lys395 and Lys425. A compositionally biased stretch (basic and acidic residues) spans 416–425 (DYVDYSDSSK). The nuclear and nucleolar localization stretch occupies residues 447–509 (KRKRDSDSDA…KARAAEELSG (63 aa)). Phosphoserine occurs at positions 452 and 454. Thr460 carries the post-translational modification Phosphothreonine. The segment covering 466 to 475 (RVKKEKKKKK) has biased composition (basic residues). A compositionally biased stretch (acidic residues) spans 481–490 (GEEAAEDGDG). At Ser508 the chain carries Phosphoserine.

This sequence belongs to the pseudouridine synthase TruB family. As to quaternary structure, part of the H/ACA small nucleolar ribonucleoprotein (H/ACA snoRNP) complex, which contains NHP2/NOLA2, GAR1/NOLA1, NOP10/NOLA3, and DKC1/NOLA4, which is presumed to be the catalytic subunit. The complex contains a stable core formed by binding of one or two NOP10-DKC1 heterodimers to NHP2; GAR1 subsequently binds to this core via DKC1. The complex binds a box H/ACA small nucleolar RNA (snoRNA), which may target the specific site of modification within the RNA substrate. During assembly, the complex contains NAF1 instead of GAR1/NOLA1. The complex also interacts with TERC, which contains a 3'-terminal domain related to the box H/ACA snoRNAs. Specific interactions with snoRNAs or TERC are mediated by GAR1 and NHP2. Associates with NOLC1/NOPP140. H/ACA snoRNPs interact with the SMN complex, consisting of SMN1 or SMN2, GEMIN2/SIP1, DDX20/GEMIN3, and GEMIN4. This is mediated by interaction between GAR1 and SMN1 or SMN2. The SMN complex may be required for correct assembly of the H/ACA snoRNP complex. Component of the telomerase holoenzyme complex composed of one molecule of TERT, one molecule of WRAP53/TCAB1, two molecules of H/ACA ribonucleoprotein complex subunits DKC1, NOP10, NHP2 and GAR1, and a telomerase RNA template component (TERC). The telomerase holoenzyme complex is associated with TEP1, SMG6/EST1A and POT1. Interacts with SHQ1; this interaction may lead to the stabilization of DKC1, from the time of its synthesis until its association with NOP10, NHP2, and NAF1 at the nascent H/ACA RNA. Interacts with HMBOX1. Interacts with DHX36.

The protein resides in the nucleus. It localises to the nucleolus. The protein localises to the cajal body. It catalyses the reaction uridine in 5S rRNA = pseudouridine in 5S rRNA. Functionally, catalytic subunit of H/ACA small nucleolar ribonucleoprotein (H/ACA snoRNP) complex, which catalyzes pseudouridylation of rRNA. This involves the isomerization of uridine such that the ribose is subsequently attached to C5, instead of the normal N1. Each rRNA can contain up to 100 pseudouridine ('psi') residues, which may serve to stabilize the conformation of rRNAs. Required for ribosome biogenesis and telomere maintenance. Also required for correct processing or intranuclear trafficking of TERC, the RNA component of the telomerase reverse transcriptase (TERT) holoenzyme. This Rattus norvegicus (Rat) protein is H/ACA ribonucleoprotein complex subunit DKC1 (Dkc1).